The sequence spans 770 residues: Metallothionein expression activator (770 aa).

Residues 77 to 97 (LVPSPKTGDGSSDKKNIDRTW) are disordered. Residues Ser-80, Ser-122, Ser-247, Ser-249, and Ser-253 each carry the phosphoserine modification. Position 259 is a phosphothreonine (Thr-259). Residues 286–323 (PPPTLISPRMSNTSINGSPSRKYHRQRYPNKSPESNGL) form a disordered region. A compositionally biased stretch (polar residues) spans 294–304 (RMSNTSINGSP). Residues Ser-385, Ser-392, and Ser-483 each carry the phosphoserine modification. Phosphothreonine is present on residues Thr-486 and Thr-501. At Ser-564 the chain carries Phosphoserine. 2 C2H2-type zinc fingers span residues 603 to 627 (FECL…IQTH) and 633 to 657 (YSCD…KISH). The segment at 662 to 685 (YICPCGKRFNREDALMVHRSRMIC) adopts a C2H2-type 3; atypical zinc-finger fold. The tract at residues 699–770 (LTSPKKSLLD…RTLSNETDAL (72 aa)) is disordered. Residues 705 to 745 (SLLDSPHDTSPVKETIARDKDGSVLMKMEEQLRDDMRKHGL) are compositionally biased toward basic and acidic residues. 2 positions are modified to phosphoserine: Ser-709 and Ser-714. Residues 754 to 770 (AHEQNSNRTLSNETDAL) are compositionally biased toward polar residues.

Its subcellular location is the nucleus. Functionally, plays a role in regulating basal-level expression of CUP1. Activates EGT2 transcription in the absence of SWI5. This Saccharomyces cerevisiae (strain ATCC 204508 / S288c) (Baker's yeast) protein is Metallothionein expression activator (ACE2).